Reading from the N-terminus, the 464-residue chain is Cysteine--tRNA ligase (464 aa).

C29 contributes to the Zn(2+) binding site. Residues 31–41 (ATVQGDPHIGH) carry the 'HIGH' region motif. Positions 207, 232, and 236 each coordinate Zn(2+). Residues 263–267 (KMSKS) carry the 'KMSKS' region motif. Position 266 (K266) interacts with ATP.

Belongs to the class-I aminoacyl-tRNA synthetase family. In terms of assembly, monomer. It depends on Zn(2+) as a cofactor.

The protein localises to the cytoplasm. It carries out the reaction tRNA(Cys) + L-cysteine + ATP = L-cysteinyl-tRNA(Cys) + AMP + diphosphate. This Rhodococcus opacus (strain B4) protein is Cysteine--tRNA ligase.